Reading from the N-terminus, the 228-residue chain is HTH-type transcriptional regulator TfdT (228 aa).

An HTH lysR-type domain is found at 1-58 (MEIRQLKYFVAVAEAGGFGTAAQRMHISQPPLTRQIQALERDIGAKLFERTARGVELT). Positions 18–37 (FGTAAQRMHISQPPLTRQIQ) form a DNA-binding region, H-T-H motif.

The protein belongs to the LysR transcriptional regulatory family.

It localises to the cytoplasm. In terms of biological role, does not seem to be involved in the regulation of 3-chlorocatechol degradation. Does not activate the expression of its presumed target operon, tfdCDEF. This Cupriavidus pinatubonensis (strain JMP 134 / LMG 1197) (Cupriavidus necator (strain JMP 134)) protein is HTH-type transcriptional regulator TfdT (tfdT).